The chain runs to 99 residues: Bacterial microcompartment shell vertex protein EutN (99 aa).

Positions 5–87 (MKLAVVTGQI…VDLCVIGIVD (83 aa)) constitute a BMV domain.

Belongs to the CcmL/EutN family. In terms of assembly, homopentamer with a small central pore.

The protein localises to the bacterial microcompartment. It participates in amine and polyamine degradation; ethanolamine degradation. Its function is as follows. Probably forms vertices in the bacterial microcompartment (BMC) shell dedicated to ethanolamine degradation. Expression of eutK, eutL, eutM, eutN, eutS (eutSMNLK) in E.coli leads to formation of a single BMC. Coexpression of eutQ with eutSMNLK permits E.coli to make cells with more than one mobile BMC, as is usual in vivo. It may be involved in transporting positively charged molecules into and out of the BMC. The ethanolamine (EA) catabolic bacterial microcompartment (BMC) probably concentrates low levels of ethanolamine catabolic enzymes, concentrates volatile reaction intermediates, keeps the level of toxic acetaldehyde low, generates enough acetyl-CoA to support cell growth, and maintains a pool of free coenzyme A (CoA) and NAD. In terms of biological role, expression of the eut operon allows this bacteria to use ethanolamine (EA) as a carbon, nitrogen and energy source. It relies on cobalamin (vitamin B12) both as a cofactor for the ethanolamine ammonia-lyase (EAL) activity and to induce the operon. EA enhances bacterial survival in macrophages in a concentration-dependent manner, suggesting it is an important nutrient during infection. In Salmonella typhimurium (strain LT2 / SGSC1412 / ATCC 700720), this protein is Bacterial microcompartment shell vertex protein EutN.